The following is a 79-amino-acid chain: Cell division protein ZapB (79 aa).

Positions 4 to 78 (EVFEKLEAKV…LRALLGKMEE (75 aa)) form a coiled coil.

Belongs to the ZapB family. In terms of assembly, homodimer. The ends of the coiled-coil dimer bind to each other, forming polymers. Interacts with FtsZ.

The protein localises to the cytoplasm. Functionally, non-essential, abundant cell division factor that is required for proper Z-ring formation. It is recruited early to the divisome by direct interaction with FtsZ, stimulating Z-ring assembly and thereby promoting cell division earlier in the cell cycle. Its recruitment to the Z-ring requires functional FtsA or ZipA. The protein is Cell division protein ZapB of Pectobacterium atrosepticum (strain SCRI 1043 / ATCC BAA-672) (Erwinia carotovora subsp. atroseptica).